A 540-amino-acid polypeptide reads, in one-letter code: MTLKSLPAWTALQSHFEQIRHARLRDWFAPENDRAPTRAERFTIPGGGLAADFSKNRIDDETLRLLVQLARDAGVEARRDAMFAGEIVNPTEGRAALHTALRATDPQAPFHAQVSAERAKMATFARAVRSGTWTGYTGKRIRHVINIGIGGSDLGPKMVVHALHHVATPEISTHFVSNVDGADLARVLEQVDPEETLAIIVSKTFTTLETMTNARSLRDWFVARGCPEDALAKHFVGVSANPAEVVKFGIAADNVFEMWDWVGGRYSLWSAVGLSIMIAIGPEQFDELLAGANDMDRHFREAPLERNLPVLLGLIGIWYRNFFGSQSYLVAPYSEALHYLPSYLQQLEMESNGKSARLDGTFVDYPTSAVTWGEPGTNGQHAFFQMLHQGPTIVPIDFIAVLTPEHPLAGHHPKLLANCFAQSEALMLGRTLEEARKVAGPGKEALAPHLTFPGNRPTTTLLVDALTPRTLGALIALYEHKVLVQATVWDINPFDQWGVELGKILGKVVEGDLSAESVDPAKHDSSTTALIERARAALKR.

Catalysis depends on Glu350, which acts as the Proton donor. Active-site residues include His381 and Lys503.

Belongs to the GPI family.

It is found in the cytoplasm. The catalysed reaction is alpha-D-glucose 6-phosphate = beta-D-fructose 6-phosphate. Its pathway is carbohydrate biosynthesis; gluconeogenesis. The protein operates within carbohydrate degradation; glycolysis; D-glyceraldehyde 3-phosphate and glycerone phosphate from D-glucose: step 2/4. Catalyzes the reversible isomerization of glucose-6-phosphate to fructose-6-phosphate. The sequence is that of Glucose-6-phosphate isomerase from Burkholderia orbicola (strain AU 1054).